Consider the following 502-residue polypeptide: MVMTTAAASSPRTYQVRTYGCQMNVHDSERIAGLLEQAGYLRAGDADDVPDVVVFNTCAVRENADNRLYGNLGQLRPSKDRHPGMQIAVGGCLAQKDRSEIVRRAPWVDVVFGTHNIGSLPVLLERARHNAAAEVEILESLDVFPSTLPTRRESTYAGWVSISVGCNNTCTFCIVPALRGKERDRRPGDVLSEVRALVDEGVLEVTLLGQNVNSYGIEFGDRYAFGKLLRACGDIDGLERVRFTSPHPKDFTDDVIAAMAETPNVCHSLHMPLQSGSDDVLRAMRRSYRSERYLGIIEKVRAAMPDAAITTDIIVGFPGETEADFERTLDVVRSARFSSAFTFQYSKRPGTPAATMADQLPKPVVQERYERLVACVEEITWAENRRLVGETVEVLVAVGEGRKDERTGRLSGRARDGRLVHFDAGSLAGQIRPGDVVHTTVTYAAPHHLNADGEPLAHRRTPAGDAAEAGRRPRTAGVSLGLPTVGAPPSPVPPAASSACAC.

Residues 12–129 (RTYQVRTYGC…LPVLLERARH (118 aa)) form the MTTase N-terminal domain. Residues cysteine 21, cysteine 58, cysteine 92, cysteine 166, cysteine 170, and cysteine 173 each contribute to the [4Fe-4S] cluster site. Residues 152 to 383 (RESTYAGWVS…ACVEEITWAE (232 aa)) enclose the Radical SAM core domain. The TRAM domain maps to 385–455 (RRLVGETVEV…PHHLNADGEP (71 aa)). Positions 451–502 (ADGEPLAHRRTPAGDAAEAGRRPRTAGVSLGLPTVGAPPSPVPPAASSACAC) are disordered.

This sequence belongs to the methylthiotransferase family. MiaB subfamily. As to quaternary structure, monomer. [4Fe-4S] cluster is required as a cofactor.

The protein resides in the cytoplasm. The enzyme catalyses N(6)-dimethylallyladenosine(37) in tRNA + (sulfur carrier)-SH + AH2 + 2 S-adenosyl-L-methionine = 2-methylsulfanyl-N(6)-dimethylallyladenosine(37) in tRNA + (sulfur carrier)-H + 5'-deoxyadenosine + L-methionine + A + S-adenosyl-L-homocysteine + 2 H(+). Its function is as follows. Catalyzes the methylthiolation of N6-(dimethylallyl)adenosine (i(6)A), leading to the formation of 2-methylthio-N6-(dimethylallyl)adenosine (ms(2)i(6)A) at position 37 in tRNAs that read codons beginning with uridine. The sequence is that of tRNA-2-methylthio-N(6)-dimethylallyladenosine synthase from Salinispora arenicola (strain CNS-205).